Here is a 387-residue protein sequence, read N- to C-terminus: Putative ribosomal RNA large subunit methyltransferase MJ1649 (387 aa).

Residues 5 to 81 (LIKLEIDRRA…EEIDYDFFYK (77 aa)) form the PUA domain.

The protein belongs to the methyltransferase superfamily. RlmI family.

Its subcellular location is the cytoplasm. In Methanocaldococcus jannaschii (strain ATCC 43067 / DSM 2661 / JAL-1 / JCM 10045 / NBRC 100440) (Methanococcus jannaschii), this protein is Putative ribosomal RNA large subunit methyltransferase MJ1649.